Here is a 173-residue protein sequence, read N- to C-terminus: Translationally-controlled tumor protein homolog (173 aa).

In terms of domain architecture, TCTP spans 1 to 173 (MIIYKDILTG…WKHGLEEYKV (173 aa)).

This sequence belongs to the TCTP family.

It is found in the cytoplasm. The protein resides in the cytoskeleton. Its function is as follows. Involved in protein synthesis. Involved in microtubule stabilization. The polypeptide is Translationally-controlled tumor protein homolog (Aspergillus oryzae (strain ATCC 42149 / RIB 40) (Yellow koji mold)).